The primary structure comprises 232 residues: 5'-methylthioadenosine/S-adenosylhomocysteine nucleosidase (232 aa).

E12 (proton acceptor) is an active-site residue. Substrate contacts are provided by residues G78, I152, and 173-174; that span reads ME. Catalysis depends on D197, which acts as the Proton donor.

It belongs to the PNP/UDP phosphorylase family. MtnN subfamily. As to quaternary structure, homodimer.

The enzyme catalyses S-adenosyl-L-homocysteine + H2O = S-(5-deoxy-D-ribos-5-yl)-L-homocysteine + adenine. It catalyses the reaction S-methyl-5'-thioadenosine + H2O = 5-(methylsulfanyl)-D-ribose + adenine. It carries out the reaction 5'-deoxyadenosine + H2O = 5-deoxy-D-ribose + adenine. The protein operates within amino-acid biosynthesis; L-methionine biosynthesis via salvage pathway; S-methyl-5-thio-alpha-D-ribose 1-phosphate from S-methyl-5'-thioadenosine (hydrolase route): step 1/2. In terms of biological role, catalyzes the irreversible cleavage of the glycosidic bond in both 5'-methylthioadenosine (MTA) and S-adenosylhomocysteine (SAH/AdoHcy) to adenine and the corresponding thioribose, 5'-methylthioribose and S-ribosylhomocysteine, respectively. Also cleaves 5'-deoxyadenosine, a toxic by-product of radical S-adenosylmethionine (SAM) enzymes, into 5-deoxyribose and adenine. Thus, is required for in vivo function of the radical SAM enzymes biotin synthase and lipoic acid synthase, that are inhibited by 5'-deoxyadenosine accumulation. The polypeptide is 5'-methylthioadenosine/S-adenosylhomocysteine nucleosidase (Escherichia fergusonii (strain ATCC 35469 / DSM 13698 / CCUG 18766 / IAM 14443 / JCM 21226 / LMG 7866 / NBRC 102419 / NCTC 12128 / CDC 0568-73)).